The primary structure comprises 978 residues: Receptor like protein 21 (978 aa).

The first 27 residues, 1-27, serve as a signal peptide directing secretion; it reads MLLAMEGKLFLCQYLIWVMLLLGQLHG. The Extracellular portion of the chain corresponds to 28 to 930; it reads CTSCIEKERE…EEDDKAAIDM (903 aa). N-linked (GlcNAc...) asparagine glycans are attached at residues N64, N79, N102, N116, and N155. LRR repeat units lie at residues 141–167, 169–189, 190–213, 214–237, 238–262, 264–287, 288–310, 312–335, 337–361, 362–385, 386–409, 410–432, 433–455, 457–480, 481–504, 506–529, 530–553, 554–577, 579–601, 602–625, 627–646, 647–671, 673–693, 694–716, 788–811, 812–835, 837–859, and 860–885; these read LRNLKIMDLSTNYFNYSTFPFLNAATS, TTLILTYNEMDGPFPIKGLKD, LTNLELLDLRANKLNGSMQELIHL, KKLKALDLSSNKFSSSMELQELQN, LINLEVLGLAQNHVDGPIPIEVFCK, KNLRDLDLKGNHFVGQIPLCLGSL, KKLRVLDLSSNQLSGDLPSSFSS, ESLEYLSLSDNNFDGSFSLNPLTN, TNLKLFKLSSRSHTIQVKMESTWQP, NFQLSVVVLRFCSLEKIPSFLLYQ, KKLRLVDLSSNNLSGNIPTWLLTN, NPELEVLQLQNNSFTIFPIPTMV, HNLQIFDFSANNIGKFPDKMDHA, PNLVRLNGSNNGFQGYFPTSIGEM, KNISFLDLSYNNFSGKLPRSFVTG, VSIMFLKLSHNKFSGRFLPRETNF, PSLDVLRMDNNLFTGNIGGGLSNS, TMLRILDMSNNGLSGAIPRWLFEF, YLDYVLISNNFLEGTIPPSLLGM, PFLSFLDLSGNQFSGALPSHVDSE, GIYMFLHNNNFTGPIPDTLL, KSVQILDLRNNKLSGSIPQFDDTQS, NILLLKGNNLTGSIPRELCDL, SNVRLLDLSDNKLNGVIPSCLSN, LRLMYGMDLSNNELSGVIPTELGD, LLKLRTLNLSHNSLLGSIPSSFSK, IDVESLDLSHNMLQGSIPQLLSS, and LTSLAVFDVSSNNLSGIIPQGRQFNT. A glycan (N-linked (GlcNAc...) asparagine) is linked at N204. An N-linked (GlcNAc...) asparagine glycan is attached at N335. Residues N397 and N420 are each glycosylated (N-linked (GlcNAc...) asparagine). 3 N-linked (GlcNAc...) asparagine glycosylation sites follow: N463, N482, and N492. An N-linked (GlcNAc...) asparagine glycan is attached at N552. An N-linked (GlcNAc...) asparagine glycan is attached at N636. N-linked (GlcNAc...) asparagine glycosylation is found at N681 and N716. N-linked (GlcNAc...) asparagine glycosylation is present at N819. N-linked (GlcNAc...) asparagine glycosylation occurs at N872. The disordered stretch occupies residues 902–922; the sequence is TSRSCETNKSPEEADNGQEEE. Residues 931-951 form a helical membrane-spanning segment; it reads MVFYFSTASIYVTALIGVLVL. Over 952 to 978 the chain is Cytoplasmic; the sequence is MCFDCPWRRAWLRIVDAFIASAKHVLP.

Belongs to the RLP family.

It is found in the cell membrane. This is Receptor like protein 21 from Arabidopsis thaliana (Mouse-ear cress).